The primary structure comprises 547 residues: Chaperonin GroEL (547 aa).

Residues 30–33 (TLGP), Lys51, 87–91 (DGTTT), Gly415, 479–481 (NAA), and Asp495 each bind ATP.

It belongs to the chaperonin (HSP60) family. As to quaternary structure, forms a cylinder of 14 subunits composed of two heptameric rings stacked back-to-back. Interacts with the co-chaperonin GroES.

Its subcellular location is the cytoplasm. The enzyme catalyses ATP + H2O + a folded polypeptide = ADP + phosphate + an unfolded polypeptide.. Its function is as follows. Together with its co-chaperonin GroES, plays an essential role in assisting protein folding. The GroEL-GroES system forms a nano-cage that allows encapsulation of the non-native substrate proteins and provides a physical environment optimized to promote and accelerate protein folding. The chain is Chaperonin GroEL from Polynucleobacter necessarius subsp. necessarius (strain STIR1).